The chain runs to 115 residues: Synaptobrevin homolog 2 (115 aa).

Residues 1–16 show a composition bias toward low complexity; sequence MSSSVPYDPYVPPEES. The interval 1–28 is disordered; sequence MSSSVPYDPYVPPEESNSGANPNSQNKT. The Cytoplasmic segment spans residues 1 to 93; that stretch reads MSSSVPYDPY…MWWKDLKMRM (93 aa). Residues 17–28 show a composition bias toward polar residues; it reads NSGANPNSQNKT. Positions 27-87 constitute a v-SNARE coiled-coil homology domain; the sequence is KTAALRQEID…NRVRKQMWWK (61 aa). The residue at position 58 (Ser-58) is a Phosphoserine. Lys-62 is covalently cross-linked (Glycyl lysine isopeptide (Lys-Gly) (interchain with G-Cter in ubiquitin)). Cys-94 carries S-palmitoyl cysteine lipidation. The chain crosses the membrane as a helical; Anchor for type IV membrane protein span at residues 94 to 112; that stretch reads CLFLVVIILLVVIIVPIVV. Residues 113-115 lie on the Vesicular side of the membrane; sequence HFS.

Belongs to the synaptobrevin family. Palmitoylated by SWF1.

The protein localises to the endomembrane system. Its function is as follows. SNC1 and SNC2 are vesicle-targeting proteins essential for normal secretory traffic between the Golgi and the plasma membrane. They may also be involved in vesicle fusion. The polypeptide is Synaptobrevin homolog 2 (SNC2) (Saccharomyces cerevisiae (strain ATCC 204508 / S288c) (Baker's yeast)).